The following is a 235-amino-acid chain: MDSIRSIPTAIDVRQLGTVDYHIAWQLQRDLADARVAGGPDTLLLLQHPPVYTAGRRTQPHERPNPSLHGVPVVETDRGGKITWHGPGQLVGYPIIGLAEPLDVVNYVRRLEEALIKVCAELGLDTSRVNGRSGIWVPGSAGQPARKIAAIGVRVSRATTMHGFALNCQCDLDAFHAIVPCGISDAGVTSLSAELGRTVAVNDVRSAIAEAVNDALDGWLALSWLSTPASVTSTL.

One can recognise a BPL/LPL catalytic domain in the interval 37–220 (AGGPDTLLLL…AVNDALDGWL (184 aa)). Residues 78 to 85 (RGGKITWH), 150 to 152 (AIG), and 163 to 165 (GFA) each bind substrate. The Acyl-thioester intermediate role is filled by cysteine 181.

The protein belongs to the LipB family.

It is found in the cytoplasm. The catalysed reaction is octanoyl-[ACP] + L-lysyl-[protein] = N(6)-octanoyl-L-lysyl-[protein] + holo-[ACP] + H(+). It participates in protein modification; protein lipoylation via endogenous pathway; protein N(6)-(lipoyl)lysine from octanoyl-[acyl-carrier-protein]: step 1/2. Functionally, catalyzes the transfer of endogenously produced octanoic acid from octanoyl-acyl-carrier-protein onto the lipoyl domains of lipoate-dependent enzymes. Lipoyl-ACP can also act as a substrate although octanoyl-ACP is likely to be the physiological substrate. The chain is Octanoyltransferase from Mycobacterium leprae (strain Br4923).